The sequence spans 51 residues: Lantibiotic lacticin-481 (51 aa).

Residues 1 to 24 (MKEQNSFNLLQEVTESELDLILGA) constitute a propeptide that is removed on maturation. A cross-link (beta-methyllanthionine (Thr-Cys)) is located at residues 33-38 (TISHEC). 2 cross-links (lanthionine (Ser-Cys)) span residues 35 to 49 (SHEC…VFTC) and 42 to 50 (SWQFVFTCC). Residue Thr48 is modified to (Z)-2,3-didehydrobutyrine.

It belongs to the type A lantibiotic family. In terms of assembly, monomer or homodimer. In terms of processing, maturation of lantibiotics involves the enzymatic conversion of Thr, and Ser into dehydrated AA and the formation of thioether bonds with cysteine. This is followed by membrane translocation and cleavage of the modified precursor. Post-translationally, it is established that the 2,3-didehydrobutyrine is the Z-isomer.

Functionally, lanthionine-containing peptide antibiotic (lantibiotic) active on Gram-positive bacteria. The bactericidal activity of lantibiotics is based on depolarization of energized bacterial cytoplasmic membranes, initiated by the formation of aqueous transmembrane pores. Lacticin 481 is a broad spectrum bacteriocin exhibiting activity against a wide range of lactic acid bacteria and C.tyrobutyricum. The polypeptide is Lantibiotic lacticin-481 (lctA) (Lactococcus lactis subsp. lactis (Streptococcus lactis)).